The following is a 188-amino-acid chain: Peptidyl-tRNA hydrolase (188 aa).

Tyrosine 16 serves as a coordination point for tRNA. Histidine 21 (proton acceptor) is an active-site residue. TRNA-binding residues include phenylalanine 66, asparagine 68, and asparagine 114.

It belongs to the PTH family. In terms of assembly, monomer.

The protein resides in the cytoplasm. The catalysed reaction is an N-acyl-L-alpha-aminoacyl-tRNA + H2O = an N-acyl-L-amino acid + a tRNA + H(+). Functionally, hydrolyzes ribosome-free peptidyl-tRNAs (with 1 or more amino acids incorporated), which drop off the ribosome during protein synthesis, or as a result of ribosome stalling. Catalyzes the release of premature peptidyl moieties from peptidyl-tRNA molecules trapped in stalled 50S ribosomal subunits, and thus maintains levels of free tRNAs and 50S ribosomes. The polypeptide is Peptidyl-tRNA hydrolase (Geobacter sp. (strain M21)).